Reading from the N-terminus, the 185-residue chain is ATP-dependent protease subunit HslV (185 aa).

The active site involves T2. Na(+) contacts are provided by G157, C160, and T163.

It belongs to the peptidase T1B family. HslV subfamily. A double ring-shaped homohexamer of HslV is capped on each side by a ring-shaped HslU homohexamer. The assembly of the HslU/HslV complex is dependent on binding of ATP.

Its subcellular location is the cytoplasm. It catalyses the reaction ATP-dependent cleavage of peptide bonds with broad specificity.. Allosterically activated by HslU binding. Its function is as follows. Protease subunit of a proteasome-like degradation complex believed to be a general protein degrading machinery. The polypeptide is ATP-dependent protease subunit HslV (Idiomarina loihiensis (strain ATCC BAA-735 / DSM 15497 / L2-TR)).